The primary structure comprises 423 residues: p-aminobenzoyl-glutamate hydrolase subunit A homolog (423 aa).

It belongs to the peptidase M20 family. Mn(2+) serves as cofactor.

Its function is as follows. Catalyzes the cleavage of p-aminobenzoyl-glutamate (PABA-GLU) to form p-aminobenzoate (PABA) and glutamate. This Haemophilus influenzae (strain ATCC 51907 / DSM 11121 / KW20 / Rd) protein is p-aminobenzoyl-glutamate hydrolase subunit A homolog (abgA).